A 625-amino-acid chain; its full sequence is Chaperone protein HtpG (625 aa).

The tract at residues 1 to 341 (MERKEFKAES…SEDLSLNISR (341 aa)) is a; substrate-binding. Residues 342-551 (EMLQHDRQLK…EGEVSIEMEK (210 aa)) form a b region. Residues 552-625 (VLRAMPDNQN…FSNDICKVMA (74 aa)) form a c region.

It belongs to the heat shock protein 90 family. As to quaternary structure, homodimer.

The protein localises to the cytoplasm. Molecular chaperone. Has ATPase activity. The polypeptide is Chaperone protein HtpG (Halalkalibacterium halodurans (strain ATCC BAA-125 / DSM 18197 / FERM 7344 / JCM 9153 / C-125) (Bacillus halodurans)).